The primary structure comprises 1138 residues: Tyrosine-protein kinase receptor Tie-1 (1138 aa).

The first 21 residues, 1 to 21, serve as a signal peptide directing secretion; sequence MVWRVPPFLLPILFLASHVGA. Residues 22–759 lie on the Extracellular side of the membrane; the sequence is AVDLTLLANL…SRAAEEGLDQ (738 aa). The 63-residue stretch at 43-105 folds into the Ig-like C2-type 1 domain; sequence CVSGEAGAGR…PSDLVGVFSC (63 aa). N-linked (GlcNAc...) asparagine glycans are attached at residues N83 and N161. EGF-like domains are found at residues 214 to 256, 258 to 303, and 305 to 345; these read GCGA…TRCE, ACRE…SQCQ, and ACAP…VHCE. Intrachain disulfides connect C228/C237, C231/C244, and C246/C255. 3 disulfide bridges follow: C315-C327, C321-C333, and C335-C344. An Ig-like C2-type 2 domain is found at 372–426; sequence CAAAGNPFPVRGSIELRKPDGTVLLSTKAIVEPEKTTAEFEVPRLVLADSGFWEC. Fibronectin type-III domains lie at 446–545, 548–642, and 646–739; these read PPVP…CPEP, QPWL…LPPS, and APRH…TLGN. N503, N596, and N709 each carry an N-linked (GlcNAc...) asparagine glycan. A helical membrane pass occupies residues 760-784; the sequence is QLILAVVGSVSATCLTILAALLTLV. The Cytoplasmic segment spans residues 785–1138; sequence CIRRSCLHRR…AGIDATAEEA (354 aa). The Protein kinase domain occupies 839-1118; it reads ITFEDLIGEG…RMLEARKAYV (280 aa). ATP-binding positions include 845–853 and K870; that span reads IGEGNFGQV. The active-site Proton acceptor is D979. Y1007 is modified (phosphotyrosine; by autocatalysis).

Belongs to the protein kinase superfamily. Tyr protein kinase family. Tie subfamily. As to quaternary structure, heterodimer with TEK/TIE2. Interacts with SVEP1 (via C-terminus). Phosphorylated on tyrosine residues in response to ANGPT1, most likely by TEK/TIE2. Specifically expressed in developing vascular endothelial cells.

It localises to the cell membrane. The enzyme catalyses L-tyrosyl-[protein] + ATP = O-phospho-L-tyrosyl-[protein] + ADP + H(+). Functionally, transmembrane tyrosine-protein kinase that may modulate TEK/TIE2 activity and contribute to the regulation of angiogenesis. The polypeptide is Tyrosine-protein kinase receptor Tie-1 (TIE1) (Homo sapiens (Human)).